Here is a 1004-residue protein sequence, read N- to C-terminus: Ephrin type-B receptor 2 (1004 aa).

The signal sequence occupies residues 1–19; it reads MGPLWFCCLPLALLPLLAA. Residues 20–544 lie on the Extracellular side of the membrane; it reads VEETLMDSTT…QTSVQEKLPL (525 aa). The Eph LBD domain occupies 21 to 203; the sequence is EETLMDSTTA…FYRKCPRVIQ (183 aa). 2 disulfides stabilise this stretch: C63-C185 and C98-C108. N266, N337, N429, N478, and N483 each carry an N-linked (GlcNAc...) asparagine glycan. 2 consecutive Fibronectin type-III domains span residues 325–435 and 436–531; these read IPSA…TNQA and APSA…TMTE. Residues 545 to 565 form a helical membrane-spanning segment; the sequence is IIGSSAAGLVFLIAVVVIIIV. Residues 566–1004 lie on the Cytoplasmic side of the membrane; that stretch reads CNRRRGFERA…QMNQIQSVEV (439 aa). Positions 639-902 constitute a Protein kinase domain; it reads VKIEQVIGAG…QIVNTLDKMI (264 aa). ATP-binding positions include 645–653 and K671; that span reads IGAGEFGEV. D764 functions as the Proton acceptor in the catalytic mechanism. Positions 931 to 995 constitute an SAM domain; sequence TSFNTVDEWL…LNSIQVMRAQ (65 aa). Residues 1002 to 1004 carry the PDZ-binding motif; it reads VEV.

This sequence belongs to the protein kinase superfamily. Tyr protein kinase family. Ephrin receptor subfamily. In terms of assembly, heterotetramer upon binding of the ligand. The heterotetramer is composed of an ephrin dimer and a receptor dimer. Oligomerization is probably required to induce biological responses. Post-translationally, ligand binding induces cleavage by matrix metalloproteinases (MMPs) such as MMP7/MMP9, producing an EphB2/N-terminal fragment (NTF) and a C-terminal long fragment (EphB2-LF). EphB2-LF is further cleaved by MMPs, producing EphB2/CTF1 which is further cleaved by the PS1/gamma-secretase producing EphB2/CTF2. As to expression, wide tissue distribution throughout development and sustained expression in adult brain. The longer form (CEK5+) is specifically expressed in the central nervous system.

It localises to the cell membrane. The protein resides in the cell projection. The protein localises to the axon. It is found in the dendrite. The catalysed reaction is L-tyrosyl-[protein] + ATP = O-phospho-L-tyrosyl-[protein] + ADP + H(+). Its function is as follows. Receptor tyrosine kinase which binds promiscuously transmembrane ephrin-B family ligands residing on adjacent cells, leading to contact-dependent bidirectional signaling into neighboring cells. The signaling pathway downstream of the receptor is referred to as forward signaling while the signaling pathway downstream of the ephrin ligand is referred to as reverse signaling. Functions in axon guidance during development. In addition to axon guidance, also regulates dendritic spines development and maturation and stimulates the formation of excitatory synapses. The protein is Ephrin type-B receptor 2 (EPHB2) of Gallus gallus (Chicken).